Reading from the N-terminus, the 402-residue chain is Phosphoglycerate kinase (402 aa).

Substrate-binding positions include 24-26 (DFN), arginine 40, 63-66 (HFGR), arginine 122, and arginine 155. Residues lysine 206, glycine 297, glutamate 328, and 357–360 (GGDS) contribute to the ATP site.

The protein belongs to the phosphoglycerate kinase family. As to quaternary structure, monomer.

It localises to the cytoplasm. It carries out the reaction (2R)-3-phosphoglycerate + ATP = (2R)-3-phospho-glyceroyl phosphate + ADP. It functions in the pathway carbohydrate degradation; glycolysis; pyruvate from D-glyceraldehyde 3-phosphate: step 2/5. This Synechococcus elongatus (strain ATCC 33912 / PCC 7942 / FACHB-805) (Anacystis nidulans R2) protein is Phosphoglycerate kinase.